Consider the following 28-residue polypeptide: Chassatide C12 (28 aa).

The cyclopeptide (Glu-Asn) cross-link spans 1–28; it reads EYCGESCYLIPCFTPGCYCVSRQCVNKN. 3 cysteine pairs are disulfide-bonded: Cys-3-Cys-17, Cys-7-Cys-19, and Cys-12-Cys-24.

This is a cyclic peptide. Expressed in fruit, pedicel, leaf and stem but not in root (at protein level).

In terms of biological role, probably participates in a plant defense mechanism. This Chassalia chartacea (Chassalia curviflora) protein is Chassatide C12.